We begin with the raw amino-acid sequence, 314 residues long: Ribonuclease Z (314 aa).

Zn(2+) is bound by residues histidine 62, histidine 64, aspartate 66, histidine 67, histidine 144, aspartate 215, and histidine 273. The Proton acceptor role is filled by aspartate 66.

It belongs to the RNase Z family. Homodimer. Requires Zn(2+) as cofactor.

It carries out the reaction Endonucleolytic cleavage of RNA, removing extra 3' nucleotides from tRNA precursor, generating 3' termini of tRNAs. A 3'-hydroxy group is left at the tRNA terminus and a 5'-phosphoryl group is left at the trailer molecule.. Functionally, zinc phosphodiesterase, which displays some tRNA 3'-processing endonuclease activity. Probably involved in tRNA maturation, by removing a 3'-trailer from precursor tRNA. This Prochlorococcus marinus (strain NATL1A) protein is Ribonuclease Z.